A 58-amino-acid chain; its full sequence is uncharacterized protein (58 aa).

It localises to the plastid. It is found in the chloroplast. This is an uncharacterized protein from Pyropia yezoensis (Susabi-nori).